The sequence spans 416 residues: MANISEISGDSNDGGDPNKKPEEQVLRRSRRIATRNENQNKKPKEEEEKDNRSVSFPIPNELTEACVALIRKCDYPSLSSVSSYFFNLIASSELYETRSRLGLSETFLYAAIRFPDTNPPNWYILHRNKVSSLRLSKLESLPPVPYGCSVVTIGQEMYVIGGLLDVRRLQLMTLIDCRTHKCRSLPKMKRGRYHAAAGVFDGKIYVIGGFRMRKPDAEWIEVFDLKKQIWESLPGPYPKTSMDSQFFAHAVMEDKLYILGSRCLIYEPKRNGEWDATVNANPIWNLWKVPCTMQCVIDDMLYTIDPQCTLGHPIVVYNPKDKTWRPVKGESLRTLPSYFVSDGSEMANFGGKLVILGSNGSCYDTGDCIGEKGIWCVMIELEKREGGEIWGKVESLDCVLGDINFLSVWLCQTLTL.

Positions 1–11 (MANISEISGDS) are enriched in polar residues. The interval 1-55 (MANISEISGDSNDGGDPNKKPEEQVLRRSRRIATRNENQNKKPKEEEEKDNRSVS) is disordered. Composition is skewed to basic and acidic residues over residues 16-26 (DPNKKPEEQVL) and 38-52 (NQNKKPKEEEEKDNR). 4 Kelch repeats span residues 156 to 202 (EMYV…VFDG), 203 to 250 (KIYV…FAHA), 255 to 293 (KLYILGSRCLIYEPKRNGEWDATVNANPIWNLWKVPCTM), and 294 to 344 (QCVI…SDGS).

This Arabidopsis thaliana (Mouse-ear cress) protein is Kelch repeat-containing protein At1g19460.